The primary structure comprises 398 residues: Phosphoglycerate kinase (398 aa).

Residues 23-25 (DFN), arginine 38, 61-64 (HMGK), arginine 122, and arginine 155 each bind substrate. ATP contacts are provided by residues lysine 206, glycine 297, glutamate 328, and 354 to 357 (GGDS).

Belongs to the phosphoglycerate kinase family. In terms of assembly, monomer.

The protein localises to the cytoplasm. It carries out the reaction (2R)-3-phosphoglycerate + ATP = (2R)-3-phospho-glyceroyl phosphate + ADP. The protein operates within carbohydrate degradation; glycolysis; pyruvate from D-glyceraldehyde 3-phosphate: step 2/5. This Clostridium botulinum (strain Kyoto / Type A2) protein is Phosphoglycerate kinase.